The chain runs to 721 residues: Rho GTPase-activating protein gacY (721 aa).

Residues 1–325 (MDSSFKRASF…PQQPQQQQST (325 aa)) are disordered. A compositionally biased stretch (low complexity) spans 17 to 33 (NIDNINEMNNNNMNTAP). The span at 34–44 (APAPAPIPTPQ) shows a compositional bias: pro residues. Positions 146 to 168 (DNNNNGNNNNNNNNNDNNNNNNN) are enriched in low complexity. A compositionally biased stretch (acidic residues) spans 169-181 (NDDDDEDEDDDEY). Composition is skewed to polar residues over residues 182 to 202 (SNVS…NTMN) and 219 to 240 (KNDS…SSRR). Residues 308-323 (QQQQQPQQPQQPQQQQ) show a composition bias toward low complexity. A CRAL-TRIO domain is found at 363–520 (KSQRFPEIEA…AIMMHRPAGK (158 aa)). Residues 528–719 (APLEDVINRP…LILDNINILF (192 aa)) form the Rho-GAP domain.

The protein resides in the cytoplasm. Rho GTPase-activating protein involved in the signal transduction pathway. The polypeptide is Rho GTPase-activating protein gacY (gacY) (Dictyostelium discoideum (Social amoeba)).